The chain runs to 201 residues: Large ribosomal subunit protein uL4 (201 aa).

The interval 45–73 (AQKTRAEVTGSGKKPWRQKGTGRARAGSV) is disordered.

The protein belongs to the universal ribosomal protein uL4 family. In terms of assembly, part of the 50S ribosomal subunit.

One of the primary rRNA binding proteins, this protein initially binds near the 5'-end of the 23S rRNA. It is important during the early stages of 50S assembly. It makes multiple contacts with different domains of the 23S rRNA in the assembled 50S subunit and ribosome. In terms of biological role, forms part of the polypeptide exit tunnel. This Yersinia pseudotuberculosis serotype O:1b (strain IP 31758) protein is Large ribosomal subunit protein uL4.